Consider the following 190-residue polypeptide: uncharacterized protein (190 aa).

Residues 1 to 58 (MDKRILAETFRLIKQKGFSFTMNDLAAALGTSKRTLYAYYSSKDQLVEAVVEQFIAEM) form the HTH tetR-type domain. The H-T-H motif DNA-binding region spans 21–40 (TMNDLAAALGTSKRTLYAYY).

This is an uncharacterized protein from Bacillus subtilis (strain 168).